The primary structure comprises 362 residues: 3-isopropylmalate dehydrogenase (362 aa).

76-87 (GPKWGTGSVRPE) contributes to the NAD(+) binding site. Substrate-binding residues include R94, R104, R133, and D222. Positions 222, 247, and 251 each coordinate Mg(2+). 286–297 (GSAPDLGPGKVN) serves as a coordination point for NAD(+).

This sequence belongs to the isocitrate and isopropylmalate dehydrogenases family. As to quaternary structure, homodimer. The cofactor is Mg(2+). Mn(2+) serves as cofactor.

It localises to the cytoplasm. It carries out the reaction (2R,3S)-3-isopropylmalate + NAD(+) = 4-methyl-2-oxopentanoate + CO2 + NADH. Its pathway is amino-acid biosynthesis; L-leucine biosynthesis; L-leucine from 3-methyl-2-oxobutanoate: step 3/4. Catalyzes the oxidation of 3-carboxy-2-hydroxy-4-methylpentanoate (3-isopropylmalate) to 3-carboxy-4-methyl-2-oxopentanoate. The product decarboxylates to 4-methyl-2 oxopentanoate. This Pichia angusta (Yeast) protein is 3-isopropylmalate dehydrogenase (LEU2).